The chain runs to 166 residues: RNA pyrophosphohydrolase (166 aa).

One can recognise a Nudix hydrolase domain in the interval 6–149 (GFRPNVGIIL…KRDVYRKAMM (144 aa)). Residues 38 to 59 (GGIHFGETPEQALYRELREEVG) carry the Nudix box motif.

Belongs to the Nudix hydrolase family. RppH subfamily. The cofactor is a divalent metal cation.

Its function is as follows. Accelerates the degradation of transcripts by removing pyrophosphate from the 5'-end of triphosphorylated RNA, leading to a more labile monophosphorylated state that can stimulate subsequent ribonuclease cleavage. This chain is RNA pyrophosphohydrolase, found in Acinetobacter baylyi (strain ATCC 33305 / BD413 / ADP1).